A 271-amino-acid chain; its full sequence is Phosphate import ATP-binding protein PstB 1 (271 aa).

The 243-residue stretch at 24–266 (MIGKDVSVYY…PDDPRTQDYI (243 aa)) folds into the ABC transporter domain. ATP is bound at residue 56-63 (GPSGCGKS).

Belongs to the ABC transporter superfamily. Phosphate importer (TC 3.A.1.7) family. As to quaternary structure, the complex is composed of two ATP-binding proteins (PstB), two transmembrane proteins (PstC and PstA) and a solute-binding protein (PstS).

The protein localises to the cell inner membrane. It catalyses the reaction phosphate(out) + ATP + H2O = ADP + 2 phosphate(in) + H(+). Its function is as follows. Part of the ABC transporter complex PstSACB involved in phosphate import. Responsible for energy coupling to the transport system. The protein is Phosphate import ATP-binding protein PstB 1 of Rhizobium johnstonii (strain DSM 114642 / LMG 32736 / 3841) (Rhizobium leguminosarum bv. viciae).